Here is a 71-residue protein sequence, read N- to C-terminus: MTLLIILILKYLLCLENLKNISLQISKNNTINNINCENNFNNINKSYSINESNSAKNDFVKFLKFIFFHAF.

The first 23 residues, methionine 1–leucine 23, serve as a signal peptide directing secretion. Asparagine 20, asparagine 28, asparagine 44, and asparagine 50 each carry an N-linked (GlcNAc...) asparagine glycan.

Its subcellular location is the secreted. This is an uncharacterized protein from Dictyostelium discoideum (Social amoeba).